The following is a 632-amino-acid chain: Dihydrolipoyllysine-residue acetyltransferase component of pyruvate dehydrogenase complex, mitochondrial (632 aa).

The N-terminal 77 residues, 1-77, are a transit peptide targeting the mitochondrion; the sequence is MWRVCARRVQ…LLGSPSRRSY (77 aa). Lipoyl-binding domains lie at 82 to 158 and 208 to 284; these read HQKV…CITV and HMQI…CIIV. Serine 91 carries the post-translational modification Phosphoserine. An N6-lipoyllysine mark is found at lysine 123 and lysine 249. Positions 342-379 constitute a Peripheral subunit-binding (PSBD) domain; it reads FVSPLAKKLAAEKGIDLTQVKGTGPEGRIIKKDIDSFV. Arginine 446 is a CoA binding site. Lysine 451 carries the N6-acetyllysine modification. Lysine 458 bears the N6-succinyllysine mark. Residue serine 460 coordinates CoA. Lysine 532 is subject to N6-succinyllysine. Serine 551, asparagine 552, and glycine 576 together coordinate CoA. Catalysis depends on residues histidine 605 and aspartate 609.

It belongs to the 2-oxoacid dehydrogenase family. In terms of assembly, part of the pyruvate dehydrogenase complex (PDHc) that is a multi-enzyme complex composed of multiple copies of three enzymes, pyruvate dehydrogenase (subunits PDH1A and PDHB, E1 component), dihydrolipoamide acetyltransferase (DLAT, E2 component), and dihydrolipoamide dehydrogenase (DLD, E3 component) to which is added an additional protein the E3-binding protein (PDHX, E3BP). In terms of structural architecture, the E2 and E3BP components assemble into a 60meric central core with icosahedral symmetry. The central core is decorated with E1 and E3 proteins. Currently, two alternative models for the E2:E3BP stoichiometry are considered as being either 48:12 (E2(48)-E3BP(12)) or 40:20 (E2(40)-E3BP(20)). Interacts with PDK2 and PDK3. Interacts with SIRT4. Interacts with PDHB. It depends on (R)-lipoate as a cofactor. In terms of processing, delipoylated at Lys-123 and Lys-249 by SIRT4, delipoylation decreases the PHD complex activity. Expressed in flagella of epididymal sperm.

The protein resides in the mitochondrion matrix. It catalyses the reaction N(6)-[(R)-dihydrolipoyl]-L-lysyl-[protein] + acetyl-CoA = N(6)-[(R)-S(8)-acetyldihydrolipoyl]-L-lysyl-[protein] + CoA. Functionally, as part of the pyruvate dehydrogenase complex, catalyzes the transfers of an acetyl group to a lipoic acid moiety. The pyruvate dehydrogenase complex, catalyzes the overall conversion of pyruvate to acetyl-CoA and CO(2), and thereby links cytoplasmic glycolysis and the mitochondrial tricarboxylic acid (TCA) cycle. This Rattus norvegicus (Rat) protein is Dihydrolipoyllysine-residue acetyltransferase component of pyruvate dehydrogenase complex, mitochondrial.